The primary structure comprises 244 residues: 1-(5-phosphoribosyl)-5-[(5-phosphoribosylamino)methylideneamino] imidazole-4-carboxamide isomerase (244 aa).

Asp-8 (proton acceptor) is an active-site residue. Asp-129 acts as the Proton donor in catalysis.

This sequence belongs to the HisA/HisF family.

The protein resides in the cytoplasm. The enzyme catalyses 1-(5-phospho-beta-D-ribosyl)-5-[(5-phospho-beta-D-ribosylamino)methylideneamino]imidazole-4-carboxamide = 5-[(5-phospho-1-deoxy-D-ribulos-1-ylimino)methylamino]-1-(5-phospho-beta-D-ribosyl)imidazole-4-carboxamide. It participates in amino-acid biosynthesis; L-histidine biosynthesis; L-histidine from 5-phospho-alpha-D-ribose 1-diphosphate: step 4/9. The chain is 1-(5-phosphoribosyl)-5-[(5-phosphoribosylamino)methylideneamino] imidazole-4-carboxamide isomerase from Bradyrhizobium sp. (strain ORS 278).